The primary structure comprises 244 residues: Carbonic anhydrase (244 aa).

The signal sequence occupies residues 1 to 19; it reads MKGKLSIALMLSVCFSASA. One can recognise an Alpha-carbonic anhydrase domain in the interval 23–244; it reads VHWGYEGNGD…QPLNGRIIIH (222 aa). An intrachain disulfide couples C46 to C199. The active-site Proton acceptor is H84. Zn(2+)-binding residues include H109, H111, and H128. A substrate-binding site is contributed by 195–196; that stretch reads TT.

It belongs to the alpha-carbonic anhydrase family. Requires Zn(2+) as cofactor.

The protein resides in the periplasm. The enzyme catalyses hydrogencarbonate + H(+) = CO2 + H2O. Functionally, reversible hydration of carbon dioxide. This is Carbonic anhydrase (cah) from Pectobacterium carotovorum (Erwinia carotovora).